The sequence spans 1334 residues: Aldehyde oxidase 1 (1334 aa).

Residues 5-92 (PELLFYVNGR…GAAVTTVEGI (88 aa)) enclose the 2Fe-2S ferredoxin-type domain. Residues C44, C49, C52, and C74 each contribute to the [2Fe-2S] cluster site. A Mo-molybdopterin-binding site is contributed by Q113. [2Fe-2S] cluster-binding residues include C114, C117, C149, and C151. C151 serves as a coordination point for Mo-molybdopterin. Positions 236 to 421 (FSGERMMWIS…ASVHIPYSRK (186 aa)) constitute an FAD-binding PCMH-type domain. FAD is bound by residues 264 to 271 (VVMGNTSV), A345, S354, H358, D367, and L411. Mo-molybdopterin-binding positions include 802–803 (AF) and M1043. Position 1064 is a phosphoserine (S1064). Mo-molybdopterin contacts are provided by residues 1084–1087 (GSVV), Q1199, and L1264. Catalysis depends on E1266, which acts as the Proton acceptor; for azaheterocycle hydroxylase activity.

Belongs to the xanthine dehydrogenase family. As to quaternary structure, homodimer. Requires [2Fe-2S] cluster as cofactor. The cofactor is FAD. Mo-molybdopterin is required as a cofactor. In terms of processing, the N-terminus is blocked. As to expression, very high expression in liver and lung. High expression in kidney, pancreas, brain stem and spinal cord. Moderate expression in heart, testis, eye, cerebral cortex and cerebellum. Low expression in stomach and muscle.

The protein localises to the cytoplasm. The enzyme catalyses an aldehyde + O2 + H2O = a carboxylate + H2O2 + H(+). It carries out the reaction retinal + O2 + H2O = retinoate + H2O2 + H(+). It catalyses the reaction all-trans-retinal + O2 + H2O = all-trans-retinoate + H2O2 + H(+). Its activity is regulated as follows. Inhibited by hydralazine and menadione. Not inhibited by BOF-4272 or allopurinol, xanthine dehydrogenase potent inhibitors. In contrast to guinea pig, human and rat, isovanillin is not an inhibitor but a substrate for AOX1 in rabbit. Oxidase with broad substrate specificity, oxidizing aromatic azaheterocycles, such as N1-methylnicotinamide, N-methylphthalazinium and phthalazine, as well as aldehydes, such as benzaldehyde, retinal, pyridoxal, and vanillin. Plays a key role in the metabolism of xenobiotics and drugs containing aromatic azaheterocyclic substituents. Participates in the bioactivation of prodrugs such as famciclovir, catalyzing the oxidation step from 6-deoxypenciclovir to penciclovir, which is a potent antiviral agent. Is probably involved in the regulation of reactive oxygen species homeostasis. May be a prominent source of superoxide generation via the one-electron reduction of molecular oxygen. May also catalyze nitric oxide (NO) production via the reduction of nitrite to NO with NADH or aldehyde as electron donor. May play a role in adipogenesis. Cannot use hypoxanthine and all-trans-retinol as substrate. This Oryctolagus cuniculus (Rabbit) protein is Aldehyde oxidase 1.